Reading from the N-terminus, the 266-residue chain is Energy-coupling factor transporter transmembrane protein EcfT (266 aa).

Transmembrane regions (helical) follow at residues V26–T46, L47–L67, G69–P89, L116–T136, L151–I171, S192–F212, and Y246–L266.

It belongs to the energy-coupling factor EcfT family. In terms of assembly, forms a stable energy-coupling factor (ECF) transporter complex composed of 2 membrane-embedded substrate-binding proteins (S component), 2 ATP-binding proteins (A component) and 2 transmembrane proteins (T component). May be able to interact with more than 1 S component at a time.

The protein localises to the cell membrane. Its function is as follows. Transmembrane (T) component of an energy-coupling factor (ECF) ABC-transporter complex. Unlike classic ABC transporters this ECF transporter provides the energy necessary to transport a number of different substrates. The chain is Energy-coupling factor transporter transmembrane protein EcfT from Heliobacterium modesticaldum (strain ATCC 51547 / Ice1).